A 507-amino-acid polypeptide reads, in one-letter code: Phytoene dehydrogenase (507 aa).

12–45 (VVVGAGLAGLAAALHLLGAGRRVTVVEREDVPGG) serves as a coordination point for FAD.

Belongs to the carotenoid/retinoid oxidoreductase family. It depends on FAD as a cofactor.

The protein operates within carotenoid biosynthesis; lycopene biosynthesis. Functionally, this enzyme converts phytoene into zeta-carotene via the intermediary of phytofluene by the symmetrical introduction of two double bonds at the C-11 and C-11' positions of phytoene. The protein is Phytoene dehydrogenase (crtI) of Streptomyces griseus.